A 95-amino-acid chain; its full sequence is Co-chaperonin GroES (95 aa).

The protein belongs to the GroES chaperonin family. In terms of assembly, heptamer of 7 subunits arranged in a ring. Interacts with the chaperonin GroEL.

The protein resides in the cytoplasm. In terms of biological role, together with the chaperonin GroEL, plays an essential role in assisting protein folding. The GroEL-GroES system forms a nano-cage that allows encapsulation of the non-native substrate proteins and provides a physical environment optimized to promote and accelerate protein folding. GroES binds to the apical surface of the GroEL ring, thereby capping the opening of the GroEL channel. The protein is Co-chaperonin GroES of Geobacter metallireducens (strain ATCC 53774 / DSM 7210 / GS-15).